The following is a 522-amino-acid chain: uncharacterized protein (522 aa).

Residues 1 to 11 are compositionally biased toward low complexity; that stretch reads MSSITSRVSSR. The interval 1–20 is disordered; the sequence is MSSITSRVSSRSSHELTEKK. A run of 12 helical transmembrane segments spans residues 69 to 89, 116 to 136, 141 to 161, 173 to 193, 204 to 224, 236 to 256, 303 to 323, 338 to 358, 367 to 387, 396 to 416, 428 to 448, and 462 to 482; these read VLWK…MIQY, SMTT…AILM, LSYF…LMAA, FLAG…TAMW, LCWY…SYGL, YVFI…VFIP, VIMI…GVFS, AVLN…SGVL, LLIG…IWKI, LVGV…LSLI, VTSA…PQLF, and AMIV…GYYI.

The protein belongs to the major facilitator superfamily. Allantoate permease family.

The protein localises to the endoplasmic reticulum. It localises to the membrane. This is an uncharacterized protein from Schizosaccharomyces pombe (strain 972 / ATCC 24843) (Fission yeast).